Consider the following 440-residue polypeptide: Probable aldose 1-epimerase ARB_05372 (440 aa).

A signal peptide spans 1–24 (MCGVLRQLMLLLLAFLSITPSCSA). N32, N38, N43, N68, and N112 each carry an N-linked (GlcNAc...) asparagine glycan. Residue 125–126 (NR) participates in substrate binding. N-linked (GlcNAc...) asparagine glycans are attached at residues N129, N147, N163, N171, and N199. The active-site Proton donor is H233. Residues N243, N275, N281, and N306 are each glycosylated (N-linked (GlcNAc...) asparagine). Residue D311 coordinates substrate. 4 N-linked (GlcNAc...) asparagine glycosylation sites follow: N321, N337, N365, and N385. Residue E401 is the Proton acceptor of the active site.

The protein belongs to the aldose epimerase family. As to quaternary structure, monomer.

It localises to the secreted. It carries out the reaction alpha-D-glucose = beta-D-glucose. It functions in the pathway carbohydrate metabolism; hexose metabolism. In terms of biological role, mutarotase converts alpha-aldose to the beta-anomer. It is active on D-glucose, L-arabinose, D-xylose, D-galactose, maltose and lactose. The polypeptide is Probable aldose 1-epimerase ARB_05372 (Arthroderma benhamiae (strain ATCC MYA-4681 / CBS 112371) (Trichophyton mentagrophytes)).